Reading from the N-terminus, the 335-residue chain is MNFKKLPKIELHCHLDGSLRVDTILDIAKKDNIPLPSYNKKELINYVSIMDDCNSLDEYLNKFFIPNKVMQTKENLKRIAFELLEDVAADNVKYIEVRFAPLLHVEKGLNIEEIIESVLEGIKEAEKLYDIKGNLILGCMRNMDIPSAFEVVKKGSKFIGKGVVAIDLCAGEEPHFPGKYIEVLKLAKECGYRITIHAGEAGVGENVLEAITLLNAERIGHGIYIKNCAEAYKLVKEKNIPLEVCPTSNLHTKAFESYETHPFMDFLKDGIKVTINTDNMTVSNTTITKELEMLNKFCGLSIEDYKILYLNAVEASFASPETKEILKSYANEITA.

Zn(2+) contacts are provided by His12 and His14. Residues His14 and Asp16 each contribute to the substrate site. His197 provides a ligand contact to Zn(2+). Glu200 (proton donor) is an active-site residue. Asp278 contacts Zn(2+).

It belongs to the metallo-dependent hydrolases superfamily. Adenosine and AMP deaminases family. Adenosine deaminase subfamily. It depends on Zn(2+) as a cofactor.

The enzyme catalyses adenosine + H2O + H(+) = inosine + NH4(+). It carries out the reaction 2'-deoxyadenosine + H2O + H(+) = 2'-deoxyinosine + NH4(+). Functionally, catalyzes the hydrolytic deamination of adenosine and 2-deoxyadenosine. This Clostridium botulinum (strain Kyoto / Type A2) protein is Adenosine deaminase.